The sequence spans 123 residues: Ribosome-binding factor A (123 aa).

This sequence belongs to the RbfA family. In terms of assembly, monomer. Binds 30S ribosomal subunits, but not 50S ribosomal subunits or 70S ribosomes.

The protein localises to the cytoplasm. Functionally, one of several proteins that assist in the late maturation steps of the functional core of the 30S ribosomal subunit. Associates with free 30S ribosomal subunits (but not with 30S subunits that are part of 70S ribosomes or polysomes). Required for efficient processing of 16S rRNA. May interact with the 5'-terminal helix region of 16S rRNA. The protein is Ribosome-binding factor A of Syntrophus aciditrophicus (strain SB).